A 686-amino-acid chain; its full sequence is Chondroitin synthase (686 aa).

The interval 130–417 is galactosaminyltransferase; A1 domain; that stretch reads YVWAGKRKEL…LLQQKVPYFY (288 aa). UDP-N-acetyl-alpha-D-galactosamine is bound by residues proline 157, arginine 161, aspartate 188, tyrosine 217, arginine 223, and 239–240; that span reads DC. Aspartate 241 is a Mn(2+) binding site. 361–362 is a binding site for UDP-N-acetyl-alpha-D-galactosamine; that stretch reads ED. Mn(2+) is bound at residue histidine 386. Residues 418–682 are glucuronosyltransferase; A2 domain; sequence RKKEKIESAT…ECRKYTWEKI (265 aa). Residues tyrosine 441, aspartate 469, and 517–520 each bind UDP-alpha-D-glucuronate; that span reads QLDS. Aspartate 521 is a binding site for Mn(2+). UDP-alpha-D-glucuronate-binding positions include histidine 581 and 603-604; that span reads AV. Histidine 631 lines the Mn(2+) pocket.

The protein belongs to the glycosyltransferase 2 family. CS/HAS subfamily. It depends on Mn(2+) as a cofactor.

It carries out the reaction 3-O-(beta-D-GlcA-(1-&gt;3)-beta-D-GalNAc-(1-&gt;4)-beta-D-GlcA-(1-&gt;3)-beta-D-Gal-(1-&gt;3)-beta-D-Gal-(1-&gt;4)-beta-D-Xyl)-L-seryl-[protein] + UDP-N-acetyl-alpha-D-galactosamine = 3-O-(beta-D-GalNAc-(1-&gt;4)-beta-D-GlcA-(1-&gt;3)-beta-D-GalNAc-(1-&gt;4)-beta-D-GlcA-(1-&gt;3)-beta-D-Gal-(1-&gt;3)-beta-D-Gal-(1-&gt;4)-beta-D-Xyl)-L-seryl-[protein] + UDP + H(+). The enzyme catalyses 3-O-{beta-D-GlcA-(1-&gt;3)-[beta-D-GalNAc-(1-&gt;4)-beta-D-GlcA-(1-&gt;3)](n)-beta-D-GalNAc-(1-&gt;4)-beta-D-GlcA-(1-&gt;3)-beta-D-Gal-(1-&gt;3)-beta-D-Gal-(1-&gt;4)-beta-D-Xyl}-L-seryl-[protein] + UDP-N-acetyl-alpha-D-galactosamine = 3-O-{[beta-D-GalNAc-(1-&gt;4)-beta-D-GlcA-(1-&gt;3)](n+1)-beta-D-GalNAc-(1-&gt;4)-beta-D-GlcA-(1-&gt;3)-beta-D-Gal-(1-&gt;3)-beta-D-Gal-(1-&gt;4)-beta-D-Xyl}-L-seryl-[protein] + UDP + H(+). It catalyses the reaction 3-O-(beta-D-GalNAc-(1-&gt;4)-beta-D-GlcA-(1-&gt;3)-beta-D-Gal-(1-&gt;3)-beta-D-Gal-(1-&gt;4)-beta-D-Xyl)-L-seryl-[protein] + UDP-alpha-D-glucuronate = 3-O-(beta-D-GlcA-(1-&gt;3)-beta-D-GalNAc-(1-&gt;4)-beta-D-GlcA-(1-&gt;3)-beta-D-Gal-(1-&gt;3)-beta-D-Gal-(1-&gt;4)-beta-D-Xyl)-L-seryl-[protein] + UDP + H(+). The catalysed reaction is 3-O-{[beta-D-GalNAc-(1-&gt;4)-beta-D-GlcA-(1-&gt;3)](n)-beta-D-GalNAc-(1-&gt;4)-beta-D-GlcA-(1-&gt;3)-beta-D-Gal-(1-&gt;3)-beta-D-Gal-(1-&gt;4)-beta-D-Xyl}-L-seryl-[protein] + UDP-alpha-D-glucuronate = 3-O-{beta-D-GlcA-(1-&gt;3)-[beta-D-GalNAc-(1-&gt;4)-beta-D-GlcA-(1-&gt;3)](n)-beta-D-GalNAc-(1-&gt;4)-beta-D-GlcA-(1-&gt;3)-beta-D-Gal-(1-&gt;3)-beta-D-Gal-(1-&gt;4)-beta-D-Xyl}-L-seryl-[protein] + UDP + H(+). In terms of biological role, glycosyltransferase that catalyzes elongation of chondroitin, a polysaccharide composed of a repeating disaccharide of N-acetylgalactosamine (GalNAc) and glucuronic acid (GlcUA) units, by alternatively transferring the GlcUA and GalNAc moiety from UDP-GlcUA and UDP-GalNAc to the non-reducing ends of the chondroitin chain. Each chondroitin unit has the composition beta-(1-&gt;4)-GlcUA-beta-(1-&gt;3)-GalNAc. The chain is Chondroitin synthase (kfoC) from Escherichia coli.